The following is a 294-amino-acid chain: tRNA pseudouridine synthase B (294 aa).

Catalysis depends on aspartate 39, which acts as the Nucleophile.

This sequence belongs to the pseudouridine synthase TruB family. Type 1 subfamily.

The catalysed reaction is uridine(55) in tRNA = pseudouridine(55) in tRNA. Its function is as follows. Responsible for synthesis of pseudouridine from uracil-55 in the psi GC loop of transfer RNAs. The sequence is that of tRNA pseudouridine synthase B from Streptococcus pyogenes serotype M28 (strain MGAS6180).